Consider the following 282-residue polypeptide: MGLAVAKALSLQKDWEIYILDINSERGAETAKELPRTTFHYANVTKYSDLAAAFQSMFQQHGKLDFVFANAGVIERTNFYSTPQAENDMDVCPPPEPDLPSIDADLKGVVFTAYLAQHYFRHSPHRGHGGSLVMTASCGGLYPSFYSPLYSAAKFGVVGFMRSISQHFHASGIRVNAICPGIVRTNLVDSAGWDSFPPGRFIEVETIARLVLQLVDGGEPAGRGLTDTTGRHLPLEELYGVAVEISDSGFYFRDQHTFCDEGMREVMDATVVENQVGAVLNG.

Positions 23, 70, 150, 154, 183, and 185 each coordinate NADP(+). Y150 acts as the Proton acceptor in catalysis. K154 (lowers pKa of active site Tyr) is an active-site residue.

Belongs to the short-chain dehydrogenases/reductases (SDR) family.

It participates in sesquiterpene biosynthesis. Its function is as follows. Short-chain dehydrogenase/reductase; part of the gene cluster that mediates the biosynthesis of PR-toxin, a bicyclic sesquiterpene belonging to the eremophilane class and acting as a mycotoxin. The first step of the pathway is catalyzed by the aristolochene synthase which performs the cyclization of trans,trans-farnesyl diphosphate (FPP) to the bicyclic sesquiterpene aristolochene. Following the formation of aristolochene, the non-oxygenated aristolochene is converted to the trioxygenated intermediate eremofortin B, via 7-epi-neopetasone. This conversion appears to involve three enzymes, a hydroxysterol oxidase-like enzyme, the quinone-oxidase prx3 that forms the quinone-type-structure in the bicyclic nucleus of aristolochene with the C8-oxo group and the C-3 hydroxyl group, and the P450 monooxygenase prx9 that introduces the epoxide at the double bond between carbons 1 and 2. No monoxy or dioxy-intermediates have been reported to be released to the broth, so these three early oxidative reactions may be coupled together. Eremofortin B is further oxidized by another P450 monooxygenase, that introduces a second epoxide between carbons 7 and 11 prior to acetylation to eremofortin A by the acetyltransferase prx11. The second epoxidation may be performed by a second P450 monooxygenase. After the acetylation step, eremofortin A is converted to eremofortin C and then to PR-toxin. First the conversion of eremofortin A to eremofortin C proceeds by oxidation of the side chain of the molecule at C-12 and is catalyzed by the short-chain oxidoreductase prx1. The cytochrome P450 monooxygenase prx8 also plays a role in this step. The primary alcohol formed at C-12 is finally oxidized by the short-chain alcohol dehydrogenase prx4 that forms PR-toxin. In Penicillium rubens (strain ATCC 28089 / DSM 1075 / NRRL 1951 / Wisconsin 54-1255) (Penicillium chrysogenum), this protein is Short-chain dehydrogenase/reductase prx7.